The sequence spans 524 residues: CTP synthase (524 aa).

The amidoligase domain stretch occupies residues 1–263 (MKKYVIVTGG…HEKIASKLNV (263 aa)). Position 13 (Ser-13) interacts with CTP. Ser-13 lines the UTP pocket. ATP-binding positions include 14–19 (GIGKGI) and Asp-71. Mg(2+)-binding residues include Asp-71 and Glu-137. Residues 144 to 146 (DIE), 184 to 189 (KTKPTQ), and Lys-220 contribute to the CTP site. Residues 184 to 189 (KTKPTQ) and Lys-220 each bind UTP. One can recognise a Glutamine amidotransferase type-1 domain in the interval 282–524 (RIALVGKYLG…YLRKVLEGSQ (243 aa)). Gly-342 contacts L-glutamine. The active-site Nucleophile; for glutamine hydrolysis is Cys-369. Residues 370-373 (LGMQ), Glu-393, and Arg-451 each bind L-glutamine. Active-site residues include His-499 and Glu-501.

The protein belongs to the CTP synthase family. As to quaternary structure, homotetramer.

The catalysed reaction is UTP + L-glutamine + ATP + H2O = CTP + L-glutamate + ADP + phosphate + 2 H(+). It catalyses the reaction L-glutamine + H2O = L-glutamate + NH4(+). It carries out the reaction UTP + NH4(+) + ATP = CTP + ADP + phosphate + 2 H(+). The protein operates within pyrimidine metabolism; CTP biosynthesis via de novo pathway; CTP from UDP: step 2/2. Its activity is regulated as follows. Allosterically activated by GTP, when glutamine is the substrate; GTP has no effect on the reaction when ammonia is the substrate. The allosteric effector GTP functions by stabilizing the protein conformation that binds the tetrahedral intermediate(s) formed during glutamine hydrolysis. Inhibited by the product CTP, via allosteric rather than competitive inhibition. Catalyzes the ATP-dependent amination of UTP to CTP with either L-glutamine or ammonia as the source of nitrogen. Regulates intracellular CTP levels through interactions with the four ribonucleotide triphosphates. The protein is CTP synthase of Thermotoga maritima (strain ATCC 43589 / DSM 3109 / JCM 10099 / NBRC 100826 / MSB8).